The chain runs to 350 residues: Biotin synthase (350 aa).

A Radical SAM core domain is found at 38 to 256 (NHVQVSTLLS…IAVARIMMPK (219 aa)). [4Fe-4S] cluster is bound by residues Cys-53, Cys-57, and Cys-60. Positions 97, 128, 188, and 260 each coordinate [2Fe-2S] cluster.

The protein belongs to the radical SAM superfamily. Biotin synthase family. In terms of assembly, homodimer. [4Fe-4S] cluster is required as a cofactor. Requires [2Fe-2S] cluster as cofactor.

It catalyses the reaction (4R,5S)-dethiobiotin + (sulfur carrier)-SH + 2 reduced [2Fe-2S]-[ferredoxin] + 2 S-adenosyl-L-methionine = (sulfur carrier)-H + biotin + 2 5'-deoxyadenosine + 2 L-methionine + 2 oxidized [2Fe-2S]-[ferredoxin]. It functions in the pathway cofactor biosynthesis; biotin biosynthesis; biotin from 7,8-diaminononanoate: step 2/2. In terms of biological role, catalyzes the conversion of dethiobiotin (DTB) to biotin by the insertion of a sulfur atom into dethiobiotin via a radical-based mechanism. The chain is Biotin synthase from Vibrio cholerae serotype O1 (strain ATCC 39541 / Classical Ogawa 395 / O395).